The primary structure comprises 30 residues: rRNA N-glycosylase (30 aa).

The protein belongs to the ribosome-inactivating protein family. Type 1 RIP subfamily. In terms of tissue distribution, expressed in seeds.

It catalyses the reaction Endohydrolysis of the N-glycosidic bond at one specific adenosine on the 28S rRNA.. Functionally, exhibits N-glycosylase activity. Catalyzes the release of one adenine from a ribosome. Acts as a ribosome-inactivating protein and inhibits protein synthesis in a rabbit-reticulocyte lysate system and in various cell lines (in vitro). The protein is rRNA N-glycosylase of Saponaria ocymoides (Rock soapwort).